The sequence spans 661 residues: Immunoglobulin-like domain-containing receptor 2 (661 aa).

The first 35 residues, 1–35 (MPAFPTLDLDGKLGKMDRVVLGWTAVFWLTAMVEG), serve as a signal peptide directing secretion. Residues 36-177 (LQVTVPDKKK…LEGKNEDSVE (142 aa)) enclose the Ig-like V-type domain. Topologically, residues 36–201 (LQVTVPDKKK…PSFAVEIMPE (166 aa)) are lumenal. A disulfide bridge connects residues Cys-57 and Cys-160. A helical transmembrane segment spans residues 202–222 (WVFVGLVILGIFLFFVLVGIC). Residues 223-661 (WCQCCPHSCC…DFPTRMSLVV (439 aa)) are Cytoplasmic-facing. Disordered stretches follow at residues 288 to 310 (LMDK…HSVR), 410 to 429 (EDRE…MLSR), and 453 to 661 (QRSR…SLVV). Basic and acidic residues-rich tracts occupy residues 410 to 428 (EDRE…EMLS) and 463 to 478 (HEAR…ESRA). A Phosphoserine modification is found at Ser-487. The segment covering 491–506 (YYGRGRSREPPGDGER) has biased composition (basic and acidic residues). Arg-559 carries the omega-N-methylarginine modification. Ser-594 carries the post-translational modification Phosphoserine. The segment covering 595 to 607 (EGEDEDDAADEDA) has biased composition (acidic residues). A compositionally biased stretch (basic and acidic residues) spans 628–639 (RGRDLSFHSNSE).

This sequence belongs to the immunoglobulin superfamily. LISCH7 family. Interacts with MARVELD2 and OCLN. Interacts with P4HB and HSPA5; the interaction with HSPA5 stabilizes ILDR2 expression. Interacts (via C-terminus) with TRA2A, TRA2B and SRSF1. As to expression, expressed in epithelial tissues, mainly in liver, kidney and colon.

The protein resides in the endoplasmic reticulum membrane. It is found in the cell junction. It localises to the tight junction. Its subcellular location is the nucleus. In terms of biological role, may be involved in ER stress pathways with effects on lipid homeostasis and insulin secretion. With ILDR1 and LSR, involved in the maintain of the epithelial barrier function through the recruitment of MARVELD2/tricellulin to tricellular tight junctions. Also functions as a B7-like protein family member expressed on immune cells and inflamed tissue and with T-cell inhibitory activity. In the inner ear, may regulate alternative pre-mRNA splicing via binding to TRA2A, TRA2B and SRSF1. In Mus musculus (Mouse), this protein is Immunoglobulin-like domain-containing receptor 2.